The primary structure comprises 784 residues: Toll-like receptor 2 (784 aa).

An N-terminal signal peptide occupies residues 1–20 (MPRALWTAWVWAVIILSMEG). Residues 21–587 (ASHQASSLSC…ARLSLSECHR (567 aa)) are Extracellular-facing. An intrachain disulfide couples cysteine 30 to cysteine 36. LRR repeat units follow at residues 54 to 77 (VKSL…RCVN), 78 to 101 (LKTL…HLRN), 102 to 125 (LEYL…SLYA), 126 to 150 (LKFL…HLPN), 151 to 175 (LRTL…GLIF), 176 to 199 (LEEL…SIQN), 200 to 223 (ISHL…IVSS), 224 to 250 (LDCL…MNTS), 251 to 278 (VKKL…YVSG), 279 to 308 (ILEV…HLGN), 309 to 337 (VETL…LTGK), 338 to 361 (VKRV…HLKS), 362 to 388 (LEYL…AWPF), 389 to 414 (LQTL…TLKN), 415 to 437 (LNNL…WPGK), 438 to 457 (MKQL…CLPQ), 458 to 478 (TLEI…ILPQ), 479 to 500 (LKEL…FLPV), and 501 to 524 (LSVM…SFPQ). A glycan (N-linked (GlcNAc...) asparagine) is linked at asparagine 114. Residue asparagine 199 is glycosylated (N-linked (GlcNAc...) asparagine). Asparagine 248 carries an N-linked (GlcNAc...) asparagine glycan. A disulfide bridge links cysteine 353 with cysteine 382. A disulfide bridge links cysteine 432 with cysteine 454. Asparagine 442 carries an N-linked (GlcNAc...) asparagine glycan. Residues 525–579 (LKALEAGGNNFICSCDFLSFTQGQQALARVLVDWPDGYRCDAPSHVRGQRVQDAR) enclose the LRRCT domain. The helical transmembrane segment at 588-608 (AAVVSAVCCALFLLLLLTGVL) threads the bilayer. The Cytoplasmic segment spans residues 609–784 (CHRFHGLWYM…WLNLRAAIRS (176 aa)). The TIR domain occupies 639–782 (LCYDAFVSYS…AFWLNLRAAI (144 aa)). Lysine 754 participates in a covalent cross-link: Glycyl lysine isopeptide (Lys-Gly) (interchain with G-Cter in ubiquitin). Positions 761–778 (YLEWPTDETQQEAFWLNL) match the ATG16L1-binding motif motif.

The protein belongs to the Toll-like receptor family. In terms of assembly, interacts with LY96, TLR1 and TLR6 (via extracellular domain). TLR2 seems to exist in heterodimers with either TLR1 or TLR6 before stimulation by the ligand. The heterodimers form bigger oligomers in response to their corresponding ligands as well as further heterotypic associations with other receptors such as CD14 and/or CD36. Binds MYD88 (via TIR domain). Interacts with TICAM1. Interacts with CNPY3. Interacts with ATG16L1. Interacts with PPP1R11. Interacts with TICAM2. Interacts with TIRAP. In terms of processing, ubiquitinated at Lys-754 by PPP1R11, leading to its degradation. Deubiquitinated by USP2. Post-translationally, glycosylation of Asn-442 is critical for secretion of the N-terminal ectodomain of TLR2.

Its subcellular location is the membrane. The protein resides in the cytoplasmic vesicle. It localises to the phagosome membrane. It is found in the membrane raft. Its function is as follows. Cooperates with LY96 to mediate the innate immune response to bacterial lipoproteins and other microbial cell wall components. Cooperates with TLR1 or TLR6 to mediate the innate immune response to bacterial lipoproteins or lipopeptides. Acts via MYD88 and TRAF6, leading to NF-kappa-B activation, cytokine secretion and the inflammatory response. May also promote apoptosis in response to lipoproteins. Forms activation clusters composed of several receptors depending on the ligand, these clusters trigger signaling from the cell surface and subsequently are targeted to the Golgi in a lipid-raft dependent pathway. Forms the cluster TLR2:TLR6:CD14:CD36 in response to diacylated lipopeptides and TLR2:TLR1:CD14 in response to triacylated lipopeptides. This Capra hircus (Goat) protein is Toll-like receptor 2 (TLR2).